The chain runs to 325 residues: Methionine import ATP-binding protein MetN 3 (325 aa).

Positions isoleucine 2–leucine 239 constitute an ABC transporter domain. Glycine 36–serine 43 is a binding site for ATP.

Belongs to the ABC transporter superfamily. Methionine importer (TC 3.A.1.24) family. As to quaternary structure, the complex is composed of two ATP-binding proteins (MetN), two transmembrane proteins (MetI) and a solute-binding protein (MetQ).

It is found in the cell inner membrane. The catalysed reaction is L-methionine(out) + ATP + H2O = L-methionine(in) + ADP + phosphate + H(+). It catalyses the reaction D-methionine(out) + ATP + H2O = D-methionine(in) + ADP + phosphate + H(+). Part of the ABC transporter complex MetNIQ involved in methionine import. Responsible for energy coupling to the transport system. This chain is Methionine import ATP-binding protein MetN 3, found in Pseudomonas fluorescens (strain ATCC BAA-477 / NRRL B-23932 / Pf-5).